The chain runs to 204 residues: Urease accessory protein UreG (204 aa).

Residue Gly-11–Thr-18 participates in GTP binding.

Belongs to the SIMIBI class G3E GTPase family. UreG subfamily. Homodimer. UreD, UreF and UreG form a complex that acts as a GTP-hydrolysis-dependent molecular chaperone, activating the urease apoprotein by helping to assemble the nickel containing metallocenter of UreC. The UreE protein probably delivers the nickel.

The protein localises to the cytoplasm. Its function is as follows. Facilitates the functional incorporation of the urease nickel metallocenter. This process requires GTP hydrolysis, probably effectuated by UreG. The polypeptide is Urease accessory protein UreG (Staphylococcus aureus (strain bovine RF122 / ET3-1)).